We begin with the raw amino-acid sequence, 340 residues long: MISNFTGRLLLPKFRNKLCAFFSKESTSSNSLAKSKTNSELEGYTGKSNLLEKKKVGVFGTSTVPINTNFPNPKGVIGYDPDFSVKELVAELPNTRKTQGAKLAEEIKDAFSNISIEKPELLEDIGFVRHNEARVEYKFDTSEKLDLWKIGCDSDWKEGFSTCSLVNSDRGTAVFSGNISTRVLKDGRVERAGWASMKLEDRKTFNRKKFLSKWRNFSHLLLKVRGDGRSYKIMLHSPLSMDFTWGDSFSHPLHTHGGPYWQYEKIPFSKFFHTVAGRIQDRQYRVNLEDTSSIGIVLMDRIDGDFKLEIDYIGVYNDTTHVEDFAYETYTLPVFNTHGF.

Belongs to the CIA30 family.

It localises to the mitochondrion. Chaperone protein involved in the assembly of the mitochondrial NADH:ubiquinone oxidoreductase complex (complex I). Required for normal growth and reproduction. The polypeptide is Probable complex I intermediate-associated protein 30, mitochondrial (nuaf-1) (Caenorhabditis briggsae).